A 286-amino-acid polypeptide reads, in one-letter code: MQLLDGKALSLEIEAKVKEEVMILTSSRGVTPGLAVILVGSDPASQAYVNMKAKACKRAGIYSITHEMPESTTESQLLNAISILNNDPNIDGILVQLPLPKHINTAKVLEAIAPHKDVDGFHPQNVGRLTSNLGGFAPATPMGVMRLLQKYGIDPQGKNAVIVGASNIVGKPMASLLLNANATTTLCHIYTKDLASHTQNADILCVGVGKPNLITESMVKKGAVVIDIGINRLEDGSLVGDVDFASVAPKCSYITPVPGGVGPMTIASLLENTLKAAKTRQETPQS.

NADP(+)-binding positions include 164–166, I189, and I230; that span reads GAS.

It belongs to the tetrahydrofolate dehydrogenase/cyclohydrolase family. Homodimer.

The enzyme catalyses (6R)-5,10-methylene-5,6,7,8-tetrahydrofolate + NADP(+) = (6R)-5,10-methenyltetrahydrofolate + NADPH. The catalysed reaction is (6R)-5,10-methenyltetrahydrofolate + H2O = (6R)-10-formyltetrahydrofolate + H(+). Its pathway is one-carbon metabolism; tetrahydrofolate interconversion. Catalyzes the oxidation of 5,10-methylenetetrahydrofolate to 5,10-methenyltetrahydrofolate and then the hydrolysis of 5,10-methenyltetrahydrofolate to 10-formyltetrahydrofolate. The chain is Bifunctional protein FolD from Wolinella succinogenes (strain ATCC 29543 / DSM 1740 / CCUG 13145 / JCM 31913 / LMG 7466 / NCTC 11488 / FDC 602W) (Vibrio succinogenes).